Consider the following 1052-residue polypeptide: SE-cephalotoxin (1052 aa).

Residues 1–21 (MMGTSRCVILLFALLLWAANA) form the signal peptide. A propeptide spanning residues 22-29 (APPEIHTT) is cleaved from the precursor. N41 carries an N-linked (GlcNAc...) asparagine glycan. Residues 130 to 194 (TGVNRKLDQI…DMNKRRLMAE (65 aa)) are a coiled coil. A glycan (N-linked (GlcNAc...) asparagine) is linked at N353. An EGF-like domain is found at 460–497 (PGNPCNHGCNGHGECKVVPYTDQFQCFCHGNYEGKMCQ). 3 disulfides stabilise this stretch: C464–C474, C468–C485, and C487–C496. N-linked (GlcNAc...) asparagine glycans are attached at residues N576 and N715. The Sushi domain maps to 709-769 (TSCPPLNVTH…QWSATPKCES (61 aa)). Cystine bridges form between C711/C752, C739/C767, C780/C814, C784/C820, C795/C804, C829/C847, and C841/C858. One can recognise a TSP type-1 domain in the interval 768–821 (ESSWSRWSKWSACASTCGNATQSRRRRCLGQSESEKCIGPSKQVRKCFVEDCCQ). A glycan (N-linked (GlcNAc...) asparagine) is linked at N786. In terms of domain architecture, LDL-receptor class A spans 819 to 859 (CCQEKYGKFKCDNNKCISLSRVCDGNDDCRNAEDESKSRCK).

As to quaternary structure, monomer. Expressed by the salivary gland.

The protein resides in the secreted. This chain is SE-cephalotoxin, found in Acanthosepion esculentum (Golden cuttlefish).